Here is a 187-residue protein sequence, read N- to C-terminus: UPF0301 protein Noc_0368 (187 aa).

The protein belongs to the UPF0301 (AlgH) family.

This chain is UPF0301 protein Noc_0368, found in Nitrosococcus oceani (strain ATCC 19707 / BCRC 17464 / JCM 30415 / NCIMB 11848 / C-107).